The chain runs to 445 residues: Putative H/ACA ribonucleoprotein complex subunit 4 (445 aa).

Positions Met1–Thr32 are disordered. Polar residues predominate over residues Gln20–Thr32. Asp113 serves as the catalytic Nucleophile. The 76-residue stretch at His284–Met359 folds into the PUA domain. Residues Leu386–Asp445 form a disordered region.

Belongs to the pseudouridine synthase TruB family. Component of the small nucleolar ribonucleoprotein particle containing H/ACA-type snoRNAs (H/ACA snoRNPs).

The protein resides in the nucleus. It localises to the nucleolus. The enzyme catalyses a uridine in RNA = a pseudouridine in RNA. Its function is as follows. Plays a central role in ribosomal RNA processing. Probable catalytic subunit of H/ACA small nucleolar ribonucleoprotein (H/ACA snoRNP) complex, which catalyzes pseudouridylation of rRNA. This involves the isomerization of uridine such that the ribose is subsequently attached to C5, instead of the normal N1. Pseudouridine ('psi') residues may serve to stabilize the conformation of rRNAs. This is Putative H/ACA ribonucleoprotein complex subunit 4 from Caenorhabditis elegans.